A 74-amino-acid chain; its full sequence is Large ribosomal subunit protein bL31 (74 aa).

Cys16, Cys18, Cys38, and Cys41 together coordinate Zn(2+).

It belongs to the bacterial ribosomal protein bL31 family. Type A subfamily. Part of the 50S ribosomal subunit. Requires Zn(2+) as cofactor.

Functionally, binds the 23S rRNA. The chain is Large ribosomal subunit protein bL31 (rpmE) from Streptomyces coelicolor (strain ATCC BAA-471 / A3(2) / M145).